Here is a 175-residue protein sequence, read N- to C-terminus: DELTA-stichotoxin-Hcr4a (175 aa).

Residues 1-10 (ALAGAIIAGA) form a plays an important role in the hemolytic activity region. The tract at residues 9–28 (GASLTFQILDKVLAELGQVS) is N-terminal region. Ser52, Val85, Ser103, Pro105, Tyr131, Tyr135, and Tyr136 together coordinate phosphocholine. Residues 103–118 (SVPFDYNLYSNWWDVK) form a trp-rich region, which is important for the binding to lipid membrane region.

Belongs to the actinoporin family. Sea anemone subfamily. Octamer or nonamer in membranes. Monomer in the soluble state.

The protein localises to the secreted. The protein resides in the nematocyst. It is found in the target cell membrane. Pore-forming protein that forms cations-selective hydrophilic pores of around 1 nm and causes cardiac stimulation and cytolysis. Pore formation is a multi-step process that involves specific recognition of membrane sphingomyelin (but neither cholesterol nor phosphatidylcholine) using aromatic rich region and adjacent phosphocholine (POC) binding site, firm binding to the membrane (mainly driven by hydrophobic interactions) accompanied by the transfer of the N-terminal region to the lipid-water interface and finally pore formation after oligomerization of monomers. The polypeptide is DELTA-stichotoxin-Hcr4a (Radianthus crispa (Leathery sea anemone)).